Reading from the N-terminus, the 208-residue chain is Large ribosomal subunit protein uL3 (208 aa).

The disordered stretch occupies residues 122 to 148 (KRHGQSRGPMAHGSRYHRRPGSMGPVA).

The protein belongs to the universal ribosomal protein uL3 family. In terms of assembly, part of the 50S ribosomal subunit. Forms a cluster with proteins L14 and L19.

Its function is as follows. One of the primary rRNA binding proteins, it binds directly near the 3'-end of the 23S rRNA, where it nucleates assembly of the 50S subunit. This Streptococcus pyogenes serotype M1 protein is Large ribosomal subunit protein uL3.